An 85-amino-acid polypeptide reads, in one-letter code: Large ribosomal subunit protein bL27 (85 aa).

Residues 1–21 (MAHKKAGGSTRNGRDSEGKRL) are disordered.

Belongs to the bacterial ribosomal protein bL27 family.

This Hamiltonella defensa subsp. Acyrthosiphon pisum (strain 5AT) protein is Large ribosomal subunit protein bL27.